Here is a 423-residue protein sequence, read N- to C-terminus: Adenylosuccinate synthetase (423 aa).

GTP-binding positions include Gly12–Lys18 and Gly40–Thr42. Asp13 (proton acceptor) is an active-site residue. Positions 13 and 40 each coordinate Mg(2+). IMP is bound by residues Asp13–Lys16, Asn38–His41, Thr129, Arg143, Gln221, Thr236, and Arg300. His41 (proton donor) is an active-site residue. Residue Ala296 to Arg302 participates in substrate binding. GTP contacts are provided by residues Arg302, Lys328–Asp330, and Ser408–Gly410.

It belongs to the adenylosuccinate synthetase family. In terms of assembly, homodimer. Mg(2+) is required as a cofactor.

It is found in the cytoplasm. It catalyses the reaction IMP + L-aspartate + GTP = N(6)-(1,2-dicarboxyethyl)-AMP + GDP + phosphate + 2 H(+). The protein operates within purine metabolism; AMP biosynthesis via de novo pathway; AMP from IMP: step 1/2. Functionally, plays an important role in the de novo pathway of purine nucleotide biosynthesis. Catalyzes the first committed step in the biosynthesis of AMP from IMP. This is Adenylosuccinate synthetase from Parabacteroides distasonis (strain ATCC 8503 / DSM 20701 / CIP 104284 / JCM 5825 / NCTC 11152).